Reading from the N-terminus, the 343-residue chain is Aspartate-semialdehyde dehydrogenase (343 aa).

Residues 13–16 and 41–42 each bind NADP(+); these read TGAV and KS. Position 103 (Arg-103) interacts with phosphate. Residue Cys-134 is the Acyl-thioester intermediate of the active site. Gln-161 provides a ligand contact to substrate. 164–165 provides a ligand contact to NADP(+); the sequence is SG. A phosphate-binding site is contributed by Lys-220. Arg-241 contacts substrate. His-248 functions as the Proton acceptor in the catalytic mechanism. Gln-321 contacts NADP(+).

It belongs to the aspartate-semialdehyde dehydrogenase family. In terms of assembly, homodimer.

The catalysed reaction is L-aspartate 4-semialdehyde + phosphate + NADP(+) = 4-phospho-L-aspartate + NADPH + H(+). It participates in amino-acid biosynthesis; L-lysine biosynthesis via DAP pathway; (S)-tetrahydrodipicolinate from L-aspartate: step 2/4. The protein operates within amino-acid biosynthesis; L-methionine biosynthesis via de novo pathway; L-homoserine from L-aspartate: step 2/3. It functions in the pathway amino-acid biosynthesis; L-threonine biosynthesis; L-threonine from L-aspartate: step 2/5. Its function is as follows. Catalyzes the NADPH-dependent formation of L-aspartate-semialdehyde (L-ASA) by the reductive dephosphorylation of L-aspartyl-4-phosphate. In Campylobacter jejuni subsp. jejuni serotype O:2 (strain ATCC 700819 / NCTC 11168), this protein is Aspartate-semialdehyde dehydrogenase.